We begin with the raw amino-acid sequence, 322 residues long: MSQKKKASHPAINLMAGGTAGLFEALCCHPLDTIKVRMQIYRRVAGIEHVKPPGFIKTGRTIYQKEGFLALYKGLGAVVIGIIPKMAIRFSSYEFYRTLLVNKESGIVSTGNTFVAGVGAGITEAVLVVNPMEVVKIRLQAQHLTPSEPNAGPKYNNAIHAAYTIVKEEGVSALYRGVSLTAARQATNQGANFTVYSKLKEFLQNYHQMDVLPSWETSCIGLISGAIGPFSNAPLDTIKTRLQKDKSISLEKQSGMKKIITIGAQLLKEEGFRALYKGITPRVMRVAPGQAVTFTVYEYVREHLENLGIFKKNDTPKPKPLK.

Solcar repeat units lie at residues 8 to 99 (SHPA…YRTL), 111 to 202 (GNTF…LKEF), and 212 to 303 (LPSW…VREH). 6 helical membrane passes run 11-31 (AINL…CHPL), 68-88 (FLAL…KMAI), 114-134 (FVAG…PMEV), 177-193 (GVSL…GANF), 219-235 (CIGL…NAPL), and 278-295 (GITP…VTFT).

It belongs to the mitochondrial carrier (TC 2.A.29) family.

The protein resides in the mitochondrion inner membrane. Transports cytoplasmic succinate, derived from isocitrate by the action of isocitrate lyase in the cytosol, into the mitochondrial matrix in exchange for fumarate. This chain is Succinate/fumarate mitochondrial transporter (SFC1), found in Saccharomyces cerevisiae (strain ATCC 204508 / S288c) (Baker's yeast).